The sequence spans 106 residues: uncharacterized protein (106 aa).

Helical transmembrane passes span 17–37 and 55–75; these read AGLL…AVLV and FSSS…FMIF.

Its subcellular location is the membrane. This is an uncharacterized protein from Saccharomyces cerevisiae (strain ATCC 204508 / S288c) (Baker's yeast).